We begin with the raw amino-acid sequence, 318 residues long: Epithelial-stromal interaction protein 1 (318 aa).

The tract at residues 1 to 60 is disordered; it reads MNTRNRVVNSGLGASPASRPTRDPQDPSGRQGELSPVEDQREGLEAAPKGPSRESVVHAG. Coiled-coil stretches lie at residues 73 to 188 and 240 to 280; these read NINR…HQQY and LKAE…HQTE.

As to expression, highly expressed in placenta, small intestine, spleen, kidney, thymus, liver, salivary gland and testes. Weakly expressed in breast, skeletal muscle and colon. Highly expressed in breast cancer upon interaction between tumor cells and stromal cells in vitro. Expressed in blood mononuclear cells from patients with systemic lupus erythematosus (SLE).

Plays a role in M1 macrophage polarization and is required for the proper regulation of gene expression during M1 versus M2 macrophage differentiation. Might play a role in RELA/p65 and STAT1 phosphorylation and nuclear localization upon activation of macrophages. In Homo sapiens (Human), this protein is Epithelial-stromal interaction protein 1 (EPSTI1).